The sequence spans 561 residues: uncharacterized protein (561 aa).

A run of 6 helical transmembrane segments spans residues 10–29, 34–56, 63–80, 95–117, 122–144, and 164–186; these read LLRNNPEIALFLAIAIGYWI, FGSLQIGGVAGSLLAAVLISQIG, LKTVLFALFIYAVGFQSG, VLMAFVLAISGLFTVLAVARMFH, LAAGVAAGGLTQSAIIGTASSAL, and GYAVTYIFGSLAPIIICVNILPW. RCK C-terminal domains are found at residues 205-287 and 294-376; these read QGMA…LLGE and HDMD…ELGS. 5 helical membrane passes run 386 to 403, 407 to 429, 442 to 464, 479 to 501, and 538 to 560; these read LVFHGVGLVVGLLIGLIV, GSIPLTLGSGGGALLSGLLFGWY, AASTLLVDFGLSGFVAVTGLQTG, FMLGVVVSIVPLIITMLFGRYVL, and SFAITYAIANVLLTLLGPLVVAF.

The protein belongs to the AAE transporter (TC 2.A.81) family.

The protein resides in the cell membrane. This is an uncharacterized protein from Zymomonas mobilis subsp. mobilis (strain ATCC 31821 / ZM4 / CP4).